Consider the following 430-residue polypeptide: Phosphomethylpyrimidine synthase (430 aa).

Residues asparagine 67, methionine 96, tyrosine 125, histidine 161, 183 to 185 (SRG), 224 to 227 (DALR), and glutamate 263 each bind substrate. Histidine 267 contributes to the Zn(2+) binding site. Substrate is bound at residue tyrosine 290. Zn(2+) is bound at residue histidine 331. [4Fe-4S] cluster is bound by residues cysteine 406, cysteine 409, and cysteine 413.

It belongs to the ThiC family. As to quaternary structure, homodimer. [4Fe-4S] cluster is required as a cofactor.

It catalyses the reaction 5-amino-1-(5-phospho-beta-D-ribosyl)imidazole + S-adenosyl-L-methionine = 4-amino-2-methyl-5-(phosphooxymethyl)pyrimidine + CO + 5'-deoxyadenosine + formate + L-methionine + 3 H(+). It functions in the pathway cofactor biosynthesis; thiamine diphosphate biosynthesis. Functionally, catalyzes the synthesis of the hydroxymethylpyrimidine phosphate (HMP-P) moiety of thiamine from aminoimidazole ribotide (AIR) in a radical S-adenosyl-L-methionine (SAM)-dependent reaction. In Campylobacter jejuni subsp. jejuni serotype O:2 (strain ATCC 700819 / NCTC 11168), this protein is Phosphomethylpyrimidine synthase.